A 507-amino-acid chain; its full sequence is Cytochrome P450 monooxygenase tpeC (507 aa).

A helical transmembrane segment spans residues 24 to 44 (TLAIALIVGFVILKAIYNVFF). Cys-449 serves as a coordination point for heme.

Belongs to the cytochrome P450 family. It depends on heme as a cofactor.

The protein localises to the membrane. It participates in secondary metabolite biosynthesis. Functionally, cytochrome P450 monooxygenase; part of the gene cluster that mediates the biosynthesis of polyesters containing 2,4-dihydroxy-6-(2-hydroxypropyl)benzoate and 3-hydroxybutyrate moieties, such as talapolyester G, 15G256beta and 15G256beta-2; as well as to oxidized derivatives such as 15G256alpha. The biosynthesis of the polyesters probably starts with the formation of the diketide 3-hydroxybutyryl-S-ACP catalyzed by the partially reducing polyketide synthase tpeA. The acceptance of 3-hydroxybutyryl by the non-reducing polyketide synthase tpeB would initiate further elongation and cyclization, catalyzed by KS and PT, respectively, to form 2,4-dihydroxy-6-(2-hydroxyn-propyl)benzoyl-S-ACP intermediate. The TE domain could catalyze lactonization at this step to yield 6-hydroxymellein as a derailment product. The polyesterification process maybe occurs when additional molecules of 3-hydroxybutyryl are transferred to tpeB. Following the first esterification step, an intramolecular cyclization catalyzed by the TE domain of tpeB would give talarodioxadione 1, whereas the ethyl esterification of talapolyester G perhaps happens spontaneously. Further oxidation by the cytochrome P450 monooxygenase tpeC then leads to the formation of oxidized derivatives. The sequence is that of Cytochrome P450 monooxygenase tpeC from Talaromyces stipitatus (strain ATCC 10500 / CBS 375.48 / QM 6759 / NRRL 1006) (Penicillium stipitatum).